The sequence spans 421 residues: Acyl-coenzyme A thioesterase 6 (421 aa).

Active-site charge relay system residues include serine 232, aspartate 326, and histidine 360. A Peroxisome targeting signal motif is present at residues 419 to 421 (SKI).

This sequence belongs to the C/M/P thioester hydrolase family.

The protein localises to the peroxisome. Its subcellular location is the cytoplasm. It carries out the reaction pristanoyl-CoA + H2O = 2,6,10,14-tetramethylpentadecanoate + CoA + H(+). It catalyses the reaction phytanoyl-CoA + H2O = 3,7,11,15-tetramethylhexadecanoate + CoA + H(+). The protein operates within lipid metabolism; fatty acid metabolism. Functionally, catalyzes the hydrolysis of acyl-CoAs into free fatty acids and coenzyme A (CoASH), regulating their respective intracellular levels. Catalyzes the hydrolysis of phytanoyl-CoA and pristanoyl-CoA, two methyl-branched fatty acids derived from phytol, that enter the body via the diet. The sequence is that of Acyl-coenzyme A thioesterase 6 from Homo sapiens (Human).